The chain runs to 256 residues: UPF0644 protein PB2B4.06 (256 aa).

A helical membrane pass occupies residues 34–56; the sequence is GVVYAGVSGTCAAAGYMFGNFVM.

This sequence belongs to the UPF0644 family.

It is found in the mitochondrion membrane. In Schizosaccharomyces pombe (strain 972 / ATCC 24843) (Fission yeast), this protein is UPF0644 protein PB2B4.06.